Here is an 82-residue protein sequence, read N- to C-terminus: MKTLLLTLVVVTIMCLDLGYTLVCYTNVLEPPGTLETCPDDFTCVKKWEGGGRRVTQYCSHACAIPASYEFVHCCQTDKCNG.

Positions 1–21 are cleaved as a signal peptide; sequence MKTLLLTLVVVTIMCLDLGYT. Disulfide bonds link C24–C44, C38–C59, C63–C74, and C75–C80.

The protein belongs to the three-finger toxin family. Short-chain subfamily. In terms of tissue distribution, expressed by the venom gland.

Its subcellular location is the secreted. In terms of biological role, has been described to inhibit nicotinic acetylcholine receptor (nAChR) alpha-7/CHRNA7 subunits and to bind acetylcholine binding protein (AChBP) (Kd=29.5 nM). The chain is Three-finger toxin MicTx3 from Micrurus corallinus (Brazilian coral snake).